A 168-amino-acid polypeptide reads, in one-letter code: DAZ-associated protein 2 (168 aa).

Residues 1-13 show a composition bias toward low complexity; it reads MNSKGQYPTQPTY. The interval 1–25 is disordered; it reads MNSKGQYPTQPTYPVQPPGNPVYPQ. A PPAY motif is present at residues 39 to 42; it reads PPAY. Ser-77 is modified (phosphoserine).

In terms of assembly, interacts with SOX6. Interacts with DAZ1 and DAZL. Interacts with IL17RB. May interact with FAM168B. Interacts with INCA1. Interacts with EIF4G1 and EIF4G2. Interacts (via PPAY motif) with NEDD4 (via WW domains). Interacts with transcription factor TCF4; the interaction results in localization of DAZAP2 to the nucleus. Interacts with transcription factors TCF7 and TCF7L1. Interacts with transcription factor LEF1. Interacts with serine/threonine-protein kinase HIPK2; the interaction results in phosphorylation of DAZAP2 which causes localization of DAZAP2 to the nucleus, reduces interaction of DAZAP2 with HIPK2 and prevents DAZAP2-dependent degradation of HIPK2. Interacts with ubiquitin ligase SIAH1; the interaction is decreased following phosphorylation of DAZAP2 by HIPK2. Interacts with TP53; the interaction is triggered by DNA damage. Post-translationally, ubiquitinated by SMURF2, leading to proteasomal degradation. Ubiquitinated by NEDD4, leading to proteasomal degradation. In terms of processing, following DNA damage, phosphorylated by HIPK2 which promotes DAZAP2 localization to the nucleus, reduces interaction of DAZAP2 with HIPK2 and SIAH1, and prevents DAZAP2-dependent ubiquitination of HIPK2 by E3 ubiquitin-protein ligase SIAH1 and subsequent HIPK2 proteasomal degradation.

The protein resides in the cytoplasm. It is found in the nucleus. Its subcellular location is the nucleus speckle. It localises to the nuclear body. The protein localises to the stress granule. Its function is as follows. In unstressed cells, promotes SIAH1-mediated polyubiquitination and degradation of the serine/threonine-protein kinase HIPK2, probably by acting as a loading factor that potentiates complex formation between HIPK2 and ubiquitin ligase SIAH1. In response to DNA damage, localizes to the nucleus following phosphorylation by HIPK2 and modulates the expression of a subset of TP53/p53 target genes by binding to TP53 at target gene promoters. This limits the expression of a number of cell death-mediating TP53 target genes, reducing DNA damage-induced cell death. Enhances the binding of transcription factor TCF7L2/TCF4, a Wnt signaling pathway effector, to the promoters of target genes. Plays a role in stress granule formation. The polypeptide is DAZ-associated protein 2 (Bos taurus (Bovine)).